A 382-amino-acid chain; its full sequence is Lipid-A-disaccharide synthase (382 aa).

Belongs to the LpxB family.

The catalysed reaction is 2-N,3-O-bis[(3R)-3-hydroxytetradecanoyl]-alpha-D-glucosaminyl 1-phosphate + UDP-2-N,3-O-bis[(3R)-3-hydroxytetradecanoyl]-alpha-D-glucosamine = lipid A disaccharide (E. coli) + UDP + H(+). It catalyses the reaction a lipid X + a UDP-2-N,3-O-bis[(3R)-3-hydroxyacyl]-alpha-D-glucosamine = a lipid A disaccharide + UDP + H(+). The protein operates within glycolipid biosynthesis; lipid IV(A) biosynthesis; lipid IV(A) from (3R)-3-hydroxytetradecanoyl-[acyl-carrier-protein] and UDP-N-acetyl-alpha-D-glucosamine: step 5/6. Condensation of UDP-2,3-diacylglucosamine and 2,3-diacylglucosamine-1-phosphate to form lipid A disaccharide, a precursor of lipid A, a phosphorylated glycolipid that anchors the lipopolysaccharide to the outer membrane of the cell. The sequence is that of Lipid-A-disaccharide synthase from Escherichia coli O127:H6 (strain E2348/69 / EPEC).